Here is a 192-residue protein sequence, read N- to C-terminus: Ribose 1,5-bisphosphate phosphokinase PhnN (192 aa).

Belongs to the ribose 1,5-bisphosphokinase family.

It catalyses the reaction alpha-D-ribose 1,5-bisphosphate + ATP = 5-phospho-alpha-D-ribose 1-diphosphate + ADP. It participates in metabolic intermediate biosynthesis; 5-phospho-alpha-D-ribose 1-diphosphate biosynthesis; 5-phospho-alpha-D-ribose 1-diphosphate from D-ribose 5-phosphate (route II): step 3/3. Its function is as follows. Catalyzes the phosphorylation of ribose 1,5-bisphosphate to 5-phospho-D-ribosyl alpha-1-diphosphate (PRPP). This is Ribose 1,5-bisphosphate phosphokinase PhnN from Achromobacter xylosoxidans (strain A8).